Consider the following 618-residue polypeptide: tRNA 5-methylaminomethyl-2-thiouridine biosynthesis bifunctional protein MnmC (618 aa).

Residues Met-1–Glu-231 are tRNA (mnm(5)s(2)U34)-methyltransferase. The tract at residues Ile-256–Asn-618 is FAD-dependent cmnm(5)s(2)U34 oxidoreductase.

The protein in the N-terminal section; belongs to the methyltransferase superfamily. tRNA (mnm(5)s(2)U34)-methyltransferase family. It in the C-terminal section; belongs to the DAO family. Requires FAD as cofactor.

The protein localises to the cytoplasm. The enzyme catalyses 5-aminomethyl-2-thiouridine(34) in tRNA + S-adenosyl-L-methionine = 5-methylaminomethyl-2-thiouridine(34) in tRNA + S-adenosyl-L-homocysteine + H(+). Its function is as follows. Catalyzes the last two steps in the biosynthesis of 5-methylaminomethyl-2-thiouridine (mnm(5)s(2)U) at the wobble position (U34) in tRNA. Catalyzes the FAD-dependent demodification of cmnm(5)s(2)U34 to nm(5)s(2)U34, followed by the transfer of a methyl group from S-adenosyl-L-methionine to nm(5)s(2)U34, to form mnm(5)s(2)U34. This is tRNA 5-methylaminomethyl-2-thiouridine biosynthesis bifunctional protein MnmC from Dichelobacter nodosus (strain VCS1703A).